Reading from the N-terminus, the 274-residue chain is Diaminopimelate epimerase (274 aa).

3 residues coordinate substrate: asparagine 11, glutamine 44, and asparagine 64. The active-site Proton donor is the cysteine 73. Residues 74-75 (GN), asparagine 157, asparagine 190, and 208-209 (ER) contribute to the substrate site. The active-site Proton acceptor is the cysteine 217. Residue 218–219 (GS) coordinates substrate.

The protein belongs to the diaminopimelate epimerase family. Homodimer.

It localises to the cytoplasm. The enzyme catalyses (2S,6S)-2,6-diaminopimelate = meso-2,6-diaminopimelate. The protein operates within amino-acid biosynthesis; L-lysine biosynthesis via DAP pathway; DL-2,6-diaminopimelate from LL-2,6-diaminopimelate: step 1/1. Functionally, catalyzes the stereoinversion of LL-2,6-diaminopimelate (L,L-DAP) to meso-diaminopimelate (meso-DAP), a precursor of L-lysine and an essential component of the bacterial peptidoglycan. The protein is Diaminopimelate epimerase of Pectobacterium atrosepticum (strain SCRI 1043 / ATCC BAA-672) (Erwinia carotovora subsp. atroseptica).